The sequence spans 477 residues: Bifunctional protein HldE (477 aa).

The ribokinase stretch occupies residues 1 to 319 (MTPPLPGFRD…AALGGGPAPA (319 aa)). 195–198 (NLAE) provides a ligand contact to ATP. Residue Asp264 is part of the active site. The cytidylyltransferase stretch occupies residues 346–477 (MTNGCFDLLH…DLIARIRSRG (132 aa)).

It in the N-terminal section; belongs to the carbohydrate kinase PfkB family. In the C-terminal section; belongs to the cytidylyltransferase family. As to quaternary structure, homodimer.

The catalysed reaction is D-glycero-beta-D-manno-heptose 7-phosphate + ATP = D-glycero-beta-D-manno-heptose 1,7-bisphosphate + ADP + H(+). It catalyses the reaction D-glycero-beta-D-manno-heptose 1-phosphate + ATP + H(+) = ADP-D-glycero-beta-D-manno-heptose + diphosphate. It functions in the pathway nucleotide-sugar biosynthesis; ADP-L-glycero-beta-D-manno-heptose biosynthesis; ADP-L-glycero-beta-D-manno-heptose from D-glycero-beta-D-manno-heptose 7-phosphate: step 1/4. It participates in nucleotide-sugar biosynthesis; ADP-L-glycero-beta-D-manno-heptose biosynthesis; ADP-L-glycero-beta-D-manno-heptose from D-glycero-beta-D-manno-heptose 7-phosphate: step 3/4. In terms of biological role, catalyzes the phosphorylation of D-glycero-D-manno-heptose 7-phosphate at the C-1 position to selectively form D-glycero-beta-D-manno-heptose-1,7-bisphosphate. Its function is as follows. Catalyzes the ADP transfer from ATP to D-glycero-beta-D-manno-heptose 1-phosphate, yielding ADP-D-glycero-beta-D-manno-heptose. The protein is Bifunctional protein HldE of Halorhodospira halophila (strain DSM 244 / SL1) (Ectothiorhodospira halophila (strain DSM 244 / SL1)).